The sequence spans 472 residues: Ribulose bisphosphate carboxylase large chain (472 aa).

Substrate contacts are provided by Asn116 and Thr166. Residue Lys168 is the Proton acceptor of the active site. Lys170 lines the substrate pocket. Lys194, Asp196, and Glu197 together coordinate Mg(2+). N6-carboxylysine is present on Lys194. His287 functions as the Proton acceptor in the catalytic mechanism. Substrate is bound by residues Arg288, His320, and Ser372.

Belongs to the RuBisCO large chain family. Type I subfamily. Heterohexadecamer of 8 large chains and 8 small chains. Requires Mg(2+) as cofactor.

It carries out the reaction 2 (2R)-3-phosphoglycerate + 2 H(+) = D-ribulose 1,5-bisphosphate + CO2 + H2O. The enzyme catalyses D-ribulose 1,5-bisphosphate + O2 = 2-phosphoglycolate + (2R)-3-phosphoglycerate + 2 H(+). In terms of biological role, ruBisCO catalyzes two reactions: the carboxylation of D-ribulose 1,5-bisphosphate, the primary event in carbon dioxide fixation, as well as the oxidative fragmentation of the pentose substrate. Both reactions occur simultaneously and in competition at the same active site. This Nitrobacter vulgaris protein is Ribulose bisphosphate carboxylase large chain.